The chain runs to 376 residues: Succinyl-diaminopimelate desuccinylase (376 aa).

A Zn(2+)-binding site is contributed by His-67. Asp-69 is a catalytic residue. Position 100 (Asp-100) interacts with Zn(2+). Glu-134 (proton acceptor) is an active-site residue. Zn(2+)-binding residues include Glu-135, Glu-163, and His-349.

It belongs to the peptidase M20A family. DapE subfamily. Homodimer. The cofactor is Zn(2+). Requires Co(2+) as cofactor.

It catalyses the reaction N-succinyl-(2S,6S)-2,6-diaminopimelate + H2O = (2S,6S)-2,6-diaminopimelate + succinate. It functions in the pathway amino-acid biosynthesis; L-lysine biosynthesis via DAP pathway; LL-2,6-diaminopimelate from (S)-tetrahydrodipicolinate (succinylase route): step 3/3. Catalyzes the hydrolysis of N-succinyl-L,L-diaminopimelic acid (SDAP), forming succinate and LL-2,6-diaminopimelate (DAP), an intermediate involved in the bacterial biosynthesis of lysine and meso-diaminopimelic acid, an essential component of bacterial cell walls. The sequence is that of Succinyl-diaminopimelate desuccinylase from Idiomarina loihiensis (strain ATCC BAA-735 / DSM 15497 / L2-TR).